Consider the following 286-residue polypeptide: Pantothenate synthetase (286 aa).

Residue 30–37 participates in ATP binding; the sequence is MGNLHEGH. His37 (proton donor) is an active-site residue. Residue Gln64 coordinates (R)-pantoate. Gln64 lines the beta-alanine pocket. 151–154 serves as a coordination point for ATP; it reads GKKD. Residue Gln157 coordinates (R)-pantoate. ATP is bound by residues Leu180 and 188-191; that span reads LSSR.

Belongs to the pantothenate synthetase family. As to quaternary structure, homodimer.

It is found in the cytoplasm. It catalyses the reaction (R)-pantoate + beta-alanine + ATP = (R)-pantothenate + AMP + diphosphate + H(+). It participates in cofactor biosynthesis; (R)-pantothenate biosynthesis; (R)-pantothenate from (R)-pantoate and beta-alanine: step 1/1. Its function is as follows. Catalyzes the condensation of pantoate with beta-alanine in an ATP-dependent reaction via a pantoyl-adenylate intermediate. The polypeptide is Pantothenate synthetase (Leptothrix cholodnii (strain ATCC 51168 / LMG 8142 / SP-6) (Leptothrix discophora (strain SP-6))).